We begin with the raw amino-acid sequence, 577 residues long: Eukaryotic translation initiation factor 3 subunit D (577 aa).

The segment at 103-177 (DSTKTRFGRG…KDYDKPQRNR (75 aa)) is disordered. A compositionally biased stretch (basic and acidic residues) spans 166-177 (GWKDYDKPQRNR). Residues 305-319 (TLDMVTVNENAADAP) are RNA gate. The tract at residues 558 to 577 (GSFEDDGEGDVIEENVEEED) is disordered. The span at 560-577 (FEDDGEGDVIEENVEEED) shows a compositional bias: acidic residues.

It belongs to the eIF-3 subunit D family. As to quaternary structure, component of the eukaryotic translation initiation factor 3 (eIF-3) complex.

It localises to the cytoplasm. Its function is as follows. mRNA cap-binding component of the eukaryotic translation initiation factor 3 (eIF-3) complex, which is involved in protein synthesis of a specialized repertoire of mRNAs and, together with other initiation factors, stimulates binding of mRNA and methionyl-tRNAi to the 40S ribosome. The eIF-3 complex specifically targets and initiates translation of a subset of mRNAs involved in cell proliferation. In the eIF-3 complex, eif3d specifically recognizes and binds the 7-methylguanosine cap of a subset of mRNAs. In Sclerotinia sclerotiorum (strain ATCC 18683 / 1980 / Ss-1) (White mold), this protein is Eukaryotic translation initiation factor 3 subunit D.